The chain runs to 199 residues: Protein GrpE (199 aa).

Residues 20–52 are disordered; the sequence is YKVENEILEEETDEESQHQEPALGHPSYTALEE.

This sequence belongs to the GrpE family. Homodimer.

It is found in the cytoplasm. In terms of biological role, participates actively in the response to hyperosmotic and heat shock by preventing the aggregation of stress-denatured proteins, in association with DnaK and GrpE. It is the nucleotide exchange factor for DnaK and may function as a thermosensor. Unfolded proteins bind initially to DnaJ; upon interaction with the DnaJ-bound protein, DnaK hydrolyzes its bound ATP, resulting in the formation of a stable complex. GrpE releases ADP from DnaK; ATP binding to DnaK triggers the release of the substrate protein, thus completing the reaction cycle. Several rounds of ATP-dependent interactions between DnaJ, DnaK and GrpE are required for fully efficient folding. The chain is Protein GrpE from Legionella pneumophila (strain Corby).